We begin with the raw amino-acid sequence, 299 residues long: Lipoyl synthase (299 aa).

The [4Fe-4S] cluster site is built by cysteine 45, cysteine 50, cysteine 56, cysteine 71, cysteine 75, cysteine 78, and serine 284. A Radical SAM core domain is found at 57–273 (YSKGTATFMI…GDVALAKDFL (217 aa)).

This sequence belongs to the radical SAM superfamily. Lipoyl synthase family. [4Fe-4S] cluster serves as cofactor.

Its subcellular location is the cytoplasm. It carries out the reaction [[Fe-S] cluster scaffold protein carrying a second [4Fe-4S](2+) cluster] + N(6)-octanoyl-L-lysyl-[protein] + 2 oxidized [2Fe-2S]-[ferredoxin] + 2 S-adenosyl-L-methionine + 4 H(+) = [[Fe-S] cluster scaffold protein] + N(6)-[(R)-dihydrolipoyl]-L-lysyl-[protein] + 4 Fe(3+) + 2 hydrogen sulfide + 2 5'-deoxyadenosine + 2 L-methionine + 2 reduced [2Fe-2S]-[ferredoxin]. It functions in the pathway protein modification; protein lipoylation via endogenous pathway; protein N(6)-(lipoyl)lysine from octanoyl-[acyl-carrier-protein]: step 2/2. Its function is as follows. Catalyzes the radical-mediated insertion of two sulfur atoms into the C-6 and C-8 positions of the octanoyl moiety bound to the lipoyl domains of lipoate-dependent enzymes, thereby converting the octanoylated domains into lipoylated derivatives. In Desulfotalea psychrophila (strain LSv54 / DSM 12343), this protein is Lipoyl synthase.